A 564-amino-acid chain; its full sequence is MQHETKMENQSWLKKLARRLGPGHVVNLCFIVVLLFSTLLTWREVVVLEDAYISSQRNHLENVANALDKHLQYNVDKLIFLRNGMREALVAPLDFTSLRDAVTEFEQHRDEHAWKIELNRRRTLPVNGVSDALVSEGNLLSRENESLDNEITAALEVGYLLRLAHNSSSMVEQAMYVSRAGFYVSTQPTLFTRNVPTRYYGYVTQPWFIGHSQRENRHRAVRWFTSQPEHASNTEPQVTVSVPVDSNNYWYGVLGMSIPVRTMQQFLRNAIDKNLDGEYQLYDSKLRFLTSSNPDHPTGNIFDPRELALLAQAMEHDTRGGIRMDSRYVSWERLDHFDGVLVRVHTLSEGVRGDFGSISIALTLLWALFTTMLLISWYVIRRMVSNMYVLQSSLQWQAWHDTLTRLYNRGALFEKARPLAKLCQTHQHPFSVIQVDLDHFKAINDRFGHQAGDRVLSHAAGLISSSLRAQDVAGRVGGEEFCVILPGASLTEAAEVAERIRLKLNEKEMLIAKSTTIRISASLGVSSSEETGDYDFEQLQSLADRRLYLAKQAGRNRVFASDNA.

A run of 2 helical transmembrane segments spans residues 20–40 (LGPG…STLL) and 360–380 (IALT…WYVI). Residues 428 to 563 (HPFSVIQVDL…GRNRVFASDN (136 aa)) enclose the GGDEF domain. Asp-436 contacts Mg(2+). Substrate-binding residues include Asn-444, His-449, and Asp-453. Residue Glu-479 participates in Mg(2+) binding. Glu-479 (proton acceptor) is an active-site residue.

As to quaternary structure, homodimer. It depends on Mg(2+) as a cofactor.

Its subcellular location is the cell inner membrane. It catalyses the reaction 2 GTP = 3',3'-c-di-GMP + 2 diphosphate. It functions in the pathway glycan metabolism; bacterial cellulose biosynthesis. The protein operates within purine metabolism; 3',5'-cyclic di-GMP biosynthesis. Its function is as follows. Catalyzes the synthesis of cyclic-di-GMP (c-di-GMP) via the condensation of 2 GTP molecules. Cyclic-di-GMP is a second messenger which controls cell surface-associated traits in bacteria. Involved in the regulation of cellulose production. The sequence is that of Probable diguanylate cyclase DgcQ from Escherichia coli (strain K12).